Consider the following 138-residue polypeptide: Large ribosomal subunit protein uL16 (138 aa).

Belongs to the universal ribosomal protein uL16 family. As to quaternary structure, part of the 50S ribosomal subunit.

Functionally, binds 23S rRNA and is also seen to make contacts with the A and possibly P site tRNAs. The chain is Large ribosomal subunit protein uL16 from Gluconacetobacter diazotrophicus (strain ATCC 49037 / DSM 5601 / CCUG 37298 / CIP 103539 / LMG 7603 / PAl5).